We begin with the raw amino-acid sequence, 43 residues long: METATLIAIFISGLLVSFTGYALYTAFGQPSQQLRDPFEEHGD.

A helical transmembrane segment spans residues 7–27 (IAIFISGLLVSFTGYALYTAF).

It belongs to the PsbN family.

The protein localises to the plastid. The protein resides in the chloroplast thylakoid membrane. Its function is as follows. May play a role in photosystem I and II biogenesis. The protein is Protein PsbN of Suaeda maritima (Annual sea blite).